Here is a 496-residue protein sequence, read N- to C-terminus: MGLPGKNKGAVLSKIATNNQHGENSEYFDGWKAYDKDPFHLSRNPHGIIQMGLAENQLCLDLIKDWVKENPEASICTLEGIHQFSDIANFQDYHGLKKFRQAIAHFMGKARGGRVTFDPERVVMSGGATGANETIMFCLADPGDVFLIPSPYYAAFDRDLRWRTGVEIIPVPCSSSDNFKLTVDAAEWAYKKAQESNKKVKGLILTNPSNPLGTMLDKDTLTNLVRFVTRKNIHLVVDEIYAATVFAGGDFVSVAEVVNDVDISEVNVDLIHIVYSLSKDMGLPGFRVGIVYSFNDSVVSCARKMSSFGLVSSQTQLMLASMLSDDQFVDNFLMESSRRLGIRHKVFTTGIKKADIACLTSNAGLFAWMDLRHLLRDRNSFESEIELWHIIIDRVKLNVSPGSSFRCTEPGWFRICFANMDDDTLHVALGRIQDFVSKNKNKIVEKASENDQVIQNKSAKKLKWTQTNLRLSFRRLYEDGLSSPGIMSPHSPLLRA.

Positions 55 and 93 each coordinate substrate. K279 carries the N6-(pyridoxal phosphate)lysine modification. Residues S483, S488, and S491 each carry the phosphoserine modification.

This sequence belongs to the class-I pyridoxal-phosphate-dependent aminotransferase family. In terms of assembly, homodimer and heterodimer. In vivo, the relevance of heterodimerization with other ACS enzymes is however unsure. Interacts with GRF3. Pyridoxal 5'-phosphate is required as a cofactor. Post-translationally, phosphorylated on serine residue by MAP kinase (MPK6). In terms of processing, may be processed at its C-terminus. As to expression, high in developing leaves and in flowers. Expressed in roots and siliques.

It carries out the reaction S-adenosyl-L-methionine = 1-aminocyclopropane-1-carboxylate + S-methyl-5'-thioadenosine + H(+). The protein operates within alkene biosynthesis; ethylene biosynthesis via S-adenosyl-L-methionine; ethylene from S-adenosyl-L-methionine: step 1/2. In terms of biological role, 1-aminocyclopropane-1-carboxylate synthase (ACS) enzymes catalyze the conversion of S-adenosyl-L-methionine (SAM) into 1-aminocyclopropane-1-carboxylate (ACC), a direct precursor of ethylene. The protein is 1-aminocyclopropane-1-carboxylate synthase 2 (ACS2) of Arabidopsis thaliana (Mouse-ear cress).